Reading from the N-terminus, the 933-residue chain is Clumping factor A (933 aa).

Residues 1–39 (MNMKKKEKHAIRKKSIGVASVLVGTLIGFGLLSSKEADA) form the signal peptide. The YSIRK-G/S signaling motif motif lies at 9 to 20 (HAIRKKSIGVAS). 2 disordered regions span residues 34–200 (SKEA…SNKD) and 529–904 (FNNG…SEDE). Residues 40–542 (SENSVTQSDS…SGSGDGIDKP (503 aa)) form a ligand binding A region region. Over residues 47–65 (SDSASNESKSNDSSSVSAA) the composition is skewed to low complexity. Residues 71 to 105 (TNVSDTKTSSNTNNGETSVAQNPAQQETTQSSSTN) show a composition bias toward polar residues. Low complexity-rich tracts occupy residues 106 to 132 (ATTEETPVTGEATTTTTNQANTPATTQ) and 143 to 162 (NQTSNETTSNDTNTVSSVNS). A compositionally biased stretch (polar residues) spans 163–200 (PQNSTNAENVSTTQDTSTEATPSNNESAPQSTDASNKD). Positions 547 to 565 (QPDEPGEIEPIPEDSDSDP) are enriched in acidic residues. Residues 566–598 (GSDSGSDSNSDSGSDSGSDSTSDSGSDSASDSD) are compositionally biased toward low complexity. Residues 599–861 (SASDSDSASD…DSDSESDSNS (263 aa)) show a composition bias toward acidic residues. Over residues 862-880 (DSESGSNNNVVPPNSPKNG) the composition is skewed to low complexity. A compositionally biased stretch (basic and acidic residues) spans 887-896 (NEAKDSKEPL). The short motif at 896-900 (LPDTG) is the LPXTG sorting signal element. Thr-899 is subject to Pentaglycyl murein peptidoglycan amidated threonine. Residues 900-933 (GSEDEANTSLIWGLLASIGSLLLFRRKKENKDKK) constitute a propeptide, removed by sortase.

The protein belongs to the serine-aspartate repeat-containing protein (SDr) family.

The protein resides in the secreted. It is found in the cell wall. Functionally, cell surface-associated protein implicated in virulence. Promotes bacterial attachment exclusively to the gamma-chain of human fibrinogen. Induces formation of bacterial clumps. The sequence is that of Clumping factor A (clfA) from Staphylococcus aureus (strain COL).